The primary structure comprises 30 residues: Trypsin inhibitor 4 (30 aa).

Intrachain disulfides connect C3–C20, C10–C22, and C16–C28.

This sequence belongs to the protease inhibitor I7 (squash-type serine protease inhibitor) family.

It localises to the secreted. Inhibits trypsin; probably participates in a plant defense mechanism. This Momordica charantia (Bitter gourd) protein is Trypsin inhibitor 4.